A 188-amino-acid polypeptide reads, in one-letter code: Inosine triphosphate pyrophosphatase (188 aa).

T12 to K17 lines the ITP pocket. Mg(2+) is bound at residue E40. ITP is bound by residues K52, D68–T69, K85, F144–D147, K165, and H170–R171.

It belongs to the HAM1 NTPase family. As to quaternary structure, homodimer. Mg(2+) is required as a cofactor. The cofactor is Mn(2+).

The protein localises to the cytoplasm. The protein resides in the nucleus. It catalyses the reaction ITP + H2O = IMP + diphosphate + H(+). It carries out the reaction dITP + H2O = dIMP + diphosphate + H(+). The enzyme catalyses XTP + H2O = XMP + diphosphate + H(+). In terms of biological role, pyrophosphatase that hydrolyzes non-canonical purine nucleotides such as inosine triphosphate (ITP), deoxyinosine triphosphate (dITP) or xanthosine 5'-triphosphate (XTP) to their respective monophosphate derivatives. The enzyme does not distinguish between the deoxy- and ribose forms. Probably excludes non-canonical purines from RNA and DNA precursor pools, thus preventing their incorporation into RNA and DNA and avoiding chromosomal lesions. This Phaeosphaeria nodorum (strain SN15 / ATCC MYA-4574 / FGSC 10173) (Glume blotch fungus) protein is Inosine triphosphate pyrophosphatase.